The primary structure comprises 349 residues: Isopentenyl-diphosphate delta-isomerase (349 aa).

6 to 7 (RK) is a substrate binding site. FMN is bound by residues 62 to 64 (AMT), Ser-93, and Asn-122. Residue Gln-152 participates in substrate binding. Glu-153 is a binding site for Mg(2+). FMN contacts are provided by residues Lys-184, Thr-214, 259-261 (GVR), and 280-281 (AG).

It belongs to the IPP isomerase type 2 family. Homooctamer. Dimer of tetramers. FMN serves as cofactor. The cofactor is NADPH. Requires Mg(2+) as cofactor.

It localises to the cytoplasm. The catalysed reaction is isopentenyl diphosphate = dimethylallyl diphosphate. Its function is as follows. Involved in the biosynthesis of isoprenoids. Catalyzes the 1,3-allylic rearrangement of the homoallylic substrate isopentenyl (IPP) to its allylic isomer, dimethylallyl diphosphate (DMAPP). The sequence is that of Isopentenyl-diphosphate delta-isomerase from Geobacillus sp. (strain WCH70).